Consider the following 923-residue polypeptide: MNRTPIRRCKSAEIEEDPFSPIPKFSRLRTPRTSREYVCPLKSTSPQSPSSSTENEPPPVSVTSPPARKRALEESTVTPIQQKIGPPVLKRSSLSKLADGFRTAAYLNNESENDDDPFGLSFRNEQVLMSKCAPAPEKRPETLTLDPSKCLPERDMEMYRKIKKLDKFYDWQQECLSDKRLLDGENCILSLPTGAGKTLIAEVLMLREAIVRKRNAILVLPYVAIVQEKISALAPFEDAFGINIEEYASNKGRFPPIKRRKRVSVYVATIEKANMLINSLITQGQLDRVGMVVVDELHMIGDGGRGAILEQLLAKFLYKGTGQIVGMSATLPNIDDLKFALRAFVYSTNFRPVELTEFVKIGQTMHQVSENGDLNPAGDLPTNNLKSTDPDGICQLLAKLIPKNSAVIFCPNKKNCENVAVLIAKTLPAHIRQAKRAESDAFLQSYLSDNDDERMDAVLKQCILSGVAYHHSGLTQDERKCVEAAFMEGLIYVVCATSTLAAGVNLPVRRVIIKAPMVGRERLGKAQYLQMAGRAGRAGFDTKGDCITIIKAGEEERWFREMLKSDIPRCMSSLSSEESMGSFILDCVVLKLAENIEEIMTAVRYSLFYAQESPENIRKLVESSVKRLEEHYFITIEPLEQDVASEPSAQASSIPRVPGKISPSDLGNAVFNAGFDPDEATRLHADLVSSLNQGVIFASHFHLLFIITPYEQVCNINWDLFLLMYNALPSSERKLLAECGLEEKFILEAIITRVDLTAGTPRMRLYIALMLQKIWNHEPMYTVAERFGVEKGWLQATLQSSISQAASIAKFSEKITTMWPLRKLLPELVQRLSEAAQPELLPLMTVDGIKKARAAILFKAGYKTVGMIARANPLKLVQELGTIRMAQANSIIASARMVLRDQVDEKMEELDVWGVATDSFNYF.

The interval 1–84 (MNRTPIRRCK…STVTPIQQKI (84 aa)) is disordered. The span at 43 to 55 (STSPQSPSSSTEN) shows a compositional bias: low complexity. The region spanning 178–349 (DKRLLDGENC…ALRAFVYSTN (172 aa)) is the Helicase ATP-binding domain. 191 to 198 (LPTGAGKT) is a binding site for ATP. The short motif at 295–298 (DELH) is the DEAH box element. The Helicase C-terminal domain maps to 392 to 596 (GICQLLAKLI…CVVLKLAENI (205 aa)).

It belongs to the helicase family. SKI2 subfamily.

It is found in the nucleus. Its subcellular location is the chromosome. It catalyses the reaction Couples ATP hydrolysis with the unwinding of duplex DNA by translocating in the 3'-5' direction.. The enzyme catalyses ATP + H2O = ADP + phosphate + H(+). Its function is as follows. Single-stranded 3'-5' DNA helicase that plays a key role in homology-driven double-strand break (DSB) repair. Involved in different DSB repair mechanisms that are guided by annealing of extensive stretches of complementary bases at break ends, such as microhomology-mediated end-joining (MMEJ), single-strand annealing (SSA) or synthesis-dependent strand annealing (SDSA). This is Helicase POLQ-like from Caenorhabditis elegans.